The sequence spans 339 residues: MVSLLRLCSFLLAAGSILVQGSPIIAPSIPPCEPPSNFTGPSNFTSRPGNGASPFWLIAHRVLTKDGVKAALGHGANALEMDITGWWSGWFGDHDGLLTSAGDTVSDLFDEIASRRTQGDPVSFVWLDLKNPDFNKNGVNIVSLMILCREKLEKVGVRVLYGFYSSQTNGPSFKFVKQVMNENEAIGIDGKFETVEKDFEEKGIPLQKRVFSSGLFNPDFNFGNCEVHSSGVCAQLREGKESHEFSKVFGWTVSSYTRKDHVYKMMEVGVDGLIYGFVASHYYDHADIRHTLSTIRGWLEEHKDTHRLATVDDNPWSSMSKKGSSKSSWVKGEVPSIAH.

A signal peptide spans Met1–Gly21. The active site involves His60. The Mg(2+) site is built by Glu80, Asp82, and Asp128. Residues Ala309 to Trp316 carry the SMD-tail motif. Residues Asp313–His339 are disordered. Low complexity predominate over residues Ser317 to Ser328.

It belongs to the sphingomyelinase D/phospholipase D family. It depends on Mg(2+) as a cofactor.

The protein resides in the secreted. It carries out the reaction a sphingomyelin + H2O = an N-acylsphing-4-enine 1-phosphate + choline + H(+). Its function is as follows. Catalyzes the hydrolysis of sphingomyelin. Sphingomyelinases D are produced by some spider in their venoms, but also by arthropods such as ticks, or pathogenic bacteria and fungi. They might play a role in pathogenicity through different mechanisms, such as membrane destabilization and host cell penetration, but also pulmonary inflammation and cutaneous lesions. The protein is Sphingomyelinase D of Arthroderma benhamiae (strain ATCC MYA-4681 / CBS 112371) (Trichophyton mentagrophytes).